A 675-amino-acid chain; its full sequence is Methionine--tRNA ligase (675 aa).

The short motif at 15–25 is the 'HIGH' region element; sequence PYANGSIHLGH. Zn(2+)-binding residues include C146, C149, C159, and C162. Positions 332 to 336 match the 'KMSKS' region motif; the sequence is KMSKS. Residue K335 coordinates ATP. Positions 573-675 constitute a tRNA-binding domain; that stretch reads DFAKVDMRIA…SGAQPGMQVK (103 aa).

Belongs to the class-I aminoacyl-tRNA synthetase family. MetG type 1 subfamily. Homodimer. Zn(2+) is required as a cofactor.

The protein resides in the cytoplasm. The catalysed reaction is tRNA(Met) + L-methionine + ATP = L-methionyl-tRNA(Met) + AMP + diphosphate. Functionally, is required not only for elongation of protein synthesis but also for the initiation of all mRNA translation through initiator tRNA(fMet) aminoacylation. This Serratia proteamaculans (strain 568) protein is Methionine--tRNA ligase.